Reading from the N-terminus, the 400-residue chain is Cytoplasmic tRNA 2-thiolation protein 2 (400 aa).

It belongs to the CTU2/NCS2 family.

The protein resides in the cytoplasm. Its pathway is tRNA modification; 5-methoxycarbonylmethyl-2-thiouridine-tRNA biosynthesis. Functionally, plays a central role in 2-thiolation of mcm(5)S(2)U at tRNA wobble positions of tRNA(Lys), tRNA(Glu) and tRNA(Gln). May act by forming a heterodimer with NCS6/CTU1 that ligates sulfur from thiocarboxylated URM1 onto the uridine of tRNAs at wobble position. In Drosophila virilis (Fruit fly), this protein is Cytoplasmic tRNA 2-thiolation protein 2.